A 210-amino-acid chain; its full sequence is Na(+)-translocating NADH-quinone reductase subunit D (210 aa).

The next 5 membrane-spanning stretches (helical) occupy residues 42 to 62 (FVMT…VSLI), 72 to 92 (IIVQ…VLKA), 103 to 123 (VFVS…AFAM), 131 to 151 (FIDG…VAFF), and 178 to 198 (NGLM…IWAI).

The protein belongs to the NqrDE/RnfAE family. Composed of six subunits; NqrA, NqrB, NqrC, NqrD, NqrE and NqrF.

It localises to the cell inner membrane. It carries out the reaction a ubiquinone + n Na(+)(in) + NADH + H(+) = a ubiquinol + n Na(+)(out) + NAD(+). Functionally, NQR complex catalyzes the reduction of ubiquinone-1 to ubiquinol by two successive reactions, coupled with the transport of Na(+) ions from the cytoplasm to the periplasm. NqrA to NqrE are probably involved in the second step, the conversion of ubisemiquinone to ubiquinol. In Aliivibrio fischeri (strain ATCC 700601 / ES114) (Vibrio fischeri), this protein is Na(+)-translocating NADH-quinone reductase subunit D.